The primary structure comprises 587 residues: Polyadenylate-binding protein-interacting protein 3 (587 aa).

Positions 51–132 (LLVYFTTCNI…LVQVIAKDLP (82 aa)) constitute a Sm domain. Residues 422–503 (AKSENSSGWP…QSPQSPVFDG (82 aa)) are disordered. Over residues 431-464 (PGSSISRNSENSAASSASNLPILSPSSSGSLSSE) the composition is skewed to low complexity. The short motif at 467–475 (TLNPNAKEF) is the PAM2-like 1; degenerate element. The PAM2-like 2 signature appears at 476 to 486 (KLNPNAKSFKP). A compositionally biased stretch (polar residues) spans 486–498 (PSPSATRPQSPQS).

This Arabidopsis thaliana (Mouse-ear cress) protein is Polyadenylate-binding protein-interacting protein 3 (CID3).